A 290-amino-acid chain; its full sequence is MTFTDLIMTLNKFWSENGCIIQQGYDLEVGAGTFNPATALRALGPEPFSVAYVEPSRRPTDGRYGENPNRLQHYYQYQVIMKPSPENIQDLYIQSLEALGISFKDHDIRFVHDDWESPTLGAWGLGWEVWLDGMEITQFTYFQAVGGINLKPITGEITYGLERICMYLQNIDNVYDLEWGHGIKYGDVHLQGEKEFSKYNFEVADTDMYFRHFKEYEEECDRCLANGCVLPAYDMVMKSSHVFNMLDARNAISVTERAGYIARVRELMKKVSAAYIESREKLGYPLIKNK.

The protein belongs to the class-II aminoacyl-tRNA synthetase family. As to quaternary structure, tetramer of two alpha and two beta subunits.

Its subcellular location is the cytoplasm. The catalysed reaction is tRNA(Gly) + glycine + ATP = glycyl-tRNA(Gly) + AMP + diphosphate. This chain is Glycine--tRNA ligase alpha subunit, found in Brachyspira hyodysenteriae (strain ATCC 49526 / WA1).